Here is a 151-residue protein sequence, read N- to C-terminus: Protein E6 (151 aa).

Zinc fingers lie at residues 30-66 (CVYC…CKQC) and 103-139 (CHRC…CANC). The PDZ-binding domain motif lies at 149 to 151 (TQV).

This sequence belongs to the papillomaviridae E6 protein family. In terms of assembly, forms homodimers. Interacts with ubiquitin-protein ligase UBE3A/E6-AP and thus forms a complex with human TP53. Interacts with human NFX1 and MAGI3. Interacts with human IRF3; this interaction inhibits the establishment of antiviral state. Interacts with human TYK2; this interaction inhibits JAK-STAT activation by interferon alpha. Interacts with host DLG1; this interaction leads to the proteasomal degradation of DLG1.

The protein localises to the host cytoplasm. It localises to the host nucleus. Its function is as follows. Plays a major role in the induction and maintenance of cellular transformation. Acts mainly as an oncoprotein by stimulating the destruction of many host cell key regulatory proteins. E6 associates with host UBE3A/E6-AP ubiquitin-protein ligase, and inactivates tumor suppressors TP53 and TP73 by targeting them to the 26S proteasome for degradation. In turn, DNA damage and chromosomal instabilities increase and lead to cell proliferation and cancer development. The complex E6/E6AP targets several other substrates to degradation via the proteasome including host DLG1 or NFX1, a repressor of human telomerase reverse transcriptase (hTERT). The resulting increased expression of hTERT prevents the shortening of telomere length leading to cell immortalization. Other cellular targets including BAK1, Fas-associated death domain-containing protein (FADD) and procaspase 8, are degraded by E6/E6AP causing inhibition of apoptosis. E6 also inhibits immune response by interacting with host IRF3 and TYK2. These interactions prevent IRF3 transcriptional activities and inhibit TYK2-mediated JAK-STAT activation by interferon alpha resulting in inhibition of the interferon signaling pathway. In Human papillomavirus 51, this protein is Protein E6.